Here is a 270-residue protein sequence, read N- to C-terminus: tRNA pseudouridine synthase A (270 aa).

Asp-60 acts as the Nucleophile in catalysis. Tyr-118 serves as a coordination point for substrate.

It belongs to the tRNA pseudouridine synthase TruA family. Homodimer.

It carries out the reaction uridine(38/39/40) in tRNA = pseudouridine(38/39/40) in tRNA. Functionally, formation of pseudouridine at positions 38, 39 and 40 in the anticodon stem and loop of transfer RNAs. The sequence is that of tRNA pseudouridine synthase A from Salmonella arizonae (strain ATCC BAA-731 / CDC346-86 / RSK2980).